The sequence spans 99 residues: MTLTKAEMSEYLFDKLGLSKRDAKELVELFFEEIRRALENGEQVKLSGFGNFDLRDKNQRPGRNPKTGEDIPITARRVVTFRPGQKLKSRVENASPKDE.

Residues 49–72 are disordered; that stretch reads FGNFDLRDKNQRPGRNPKTGEDIP.

It belongs to the bacterial histone-like protein family. As to quaternary structure, heterodimer of an alpha and a beta chain.

Functionally, this protein is one of the two subunits of integration host factor, a specific DNA-binding protein that functions in genetic recombination as well as in transcriptional and translational control. The chain is Integration host factor subunit alpha from Escherichia coli O9:H4 (strain HS).